The sequence spans 602 residues: Lysine--tRNA ligase, chloroplastic/mitochondrial (602 aa).

Residues 50 to 62 show a composition bias toward low complexity; that stretch reads SSSSSSATTAETS. The tract at residues 50–83 is disordered; sequence SSSSSSATTAETSKPSGRNRRSASSSNSTSDREA. The OB DNA-binding region spans 136 to 214; sequence VSIAGRVVAR…SICVNSFSIL (79 aa). Positions 285 and 309 each coordinate substrate. ATP is bound by residues 331–333 and 339–340; these read RNE and HN. 2 residues coordinate substrate: Glu-347 and Tyr-349. 2 residues coordinate Ca(2+): Glu-492 and Glu-499. 499-500 contacts ATP; it reads EM. Substrate is bound by residues Asn-502 and Glu-506. Residues 524–543 are compositionally biased toward basic and acidic residues; the sequence is HNAKRAEAVRESPEPNAKKD. A disordered region spans residues 524–550; it reads HNAKRAEAVRESPEPNAKKDDDDDESY. ATP is bound at residue 575–578; it reads GIDR.

This sequence belongs to the class-II aminoacyl-tRNA synthetase family. The cofactor is Ca(2+).

It localises to the plastid. It is found in the chloroplast. The protein localises to the mitochondrion. The catalysed reaction is tRNA(Lys) + L-lysine + ATP = L-lysyl-tRNA(Lys) + AMP + diphosphate. In terms of biological role, catalyzes the specific attachment of an amino acid to its cognate tRNA in a 2 step reaction: the amino acid (AA) is first activated by ATP to form AA-AMP and then transferred to the acceptor end of the tRNA. This chain is Lysine--tRNA ligase, chloroplastic/mitochondrial, found in Arabidopsis thaliana (Mouse-ear cress).